We begin with the raw amino-acid sequence, 907 residues long: MSEGNDQDQGKGRLSLRPAGRKDVGRTVDAGSVRQSFSHGRSKVVQVEVRKKRGPGPAPAGSGSGSSGGGRAGGRGGSGGRALTASELATRQRVLEEQRAEAVRREQERREQEKIMILSAAEEARRRDEEARRAAEDEVREKEEAAARAREEEAERRASAQAHGQAGTPSRAEPEPESSGPVVSAVPIPGAVTLAPPMERLRPLAERAIMPARPVTPSRPATPAATPQAPGETLRLRTGRVGEAEDDRRPARRPGGGIAPGRKPSGASPKKGGDSRRSGRIDVQAAIEGDDDKTRSLASVRRQRERERRQAELERLRADQVRVVRDVILPETITVQELANRMAARQGEVIKALMKMGVMATVTQSLDADTAELVVQEFGHRVRRVADSDVEIGIEGIEDQPEDLLPRPPVVTVMGHVDHGKTSLLDALRTTDVAAAEAGGITQHIGAYQVTLPSGSKITFIDTPGHEAFTAMRARGASVTDVVVLVVAADDGVMPQTIEAIRHAKAANAPIIVAINKCDKPGANPERVRQELLSHEIVVESMGGDTQDVEVSALKRTGLDKLEEAILLQAEMLDLRANPDRVAEGSVIESRLDRGRGPVATVLVQKGTLRRGDIVVAGAEWGRVRAMLDDRGRQIQEAAPAMPVEILGIAGVPGAGEPFVVVDNENRAREISEFRQRVIRDRTAAGQTAARGTLDQMLARIQAGAQKEVAVLIKADVQGSAEALQATVLKLEHEEVKVRVLTAGVGQITESDVQLAKASDAVIIAFNVRATTQARELAQREGVDIRYYSIIYQVADDVEQLVKGKVAPKHREKFLGYAEIRKVFDITKVGKVAGCYVTEGVVKRGCGVRLLRDNVVVHEGELSQLKRFKDDVKEVARGYECGLSFAGYNDLREGDMVECYEMELVPA.

Positions 1–305 (MSEGNDQDQG…SLASVRRQRE (305 aa)) are disordered. Over residues 62 to 80 (SGSGSSGGGRAGGRGGSGG) the composition is skewed to gly residues. Basic and acidic residues-rich tracts occupy residues 93–114 (RVLE…EQEK) and 122–158 (EEAR…ERRA). A compositionally biased stretch (low complexity) spans 211–230 (PARPVTPSRPATPAATPQAP). Basic and acidic residues-rich tracts occupy residues 240 to 249 (RVGEAEDDRR) and 271 to 280 (KGGDSRRSGR). The 171-residue stretch at 406–576 (PRPPVVTVMG…LLQAEMLDLR (171 aa)) folds into the tr-type G domain. The interval 415 to 422 (GHVDHGKT) is G1. 415-422 (GHVDHGKT) contributes to the GTP binding site. The interval 440-444 (GITQH) is G2. A G3 region spans residues 462–465 (DTPG). GTP-binding positions include 462–466 (DTPGH) and 516–519 (NKCD). Residues 516-519 (NKCD) form a G4 region. A G5 region spans residues 552–554 (SAL).

The protein belongs to the TRAFAC class translation factor GTPase superfamily. Classic translation factor GTPase family. IF-2 subfamily.

The protein localises to the cytoplasm. One of the essential components for the initiation of protein synthesis. Protects formylmethionyl-tRNA from spontaneous hydrolysis and promotes its binding to the 30S ribosomal subunits. Also involved in the hydrolysis of GTP during the formation of the 70S ribosomal complex. The chain is Translation initiation factor IF-2 from Gluconacetobacter diazotrophicus (strain ATCC 49037 / DSM 5601 / CCUG 37298 / CIP 103539 / LMG 7603 / PAl5).